The following is a 232-amino-acid chain: Ribonuclease 3 (232 aa).

The 128-residue stretch at 6–133 (LKEIEENLGV…IIAAVYLDKG (128 aa)) folds into the RNase III domain. Glu46 provides a ligand contact to Mg(2+). Residue Asp50 is part of the active site. 2 residues coordinate Mg(2+): Asp119 and Glu122. Glu122 is a catalytic residue. The DRBM domain maps to 160 to 229 (DFKTKLQELL…AKQALDILEG (70 aa)).

This sequence belongs to the ribonuclease III family. As to quaternary structure, homodimer. The cofactor is Mg(2+).

Its subcellular location is the cytoplasm. The catalysed reaction is Endonucleolytic cleavage to 5'-phosphomonoester.. In terms of biological role, digests double-stranded RNA. Involved in the processing of primary rRNA transcript to yield the immediate precursors to the large and small rRNAs (23S and 16S). Processes some mRNAs, and tRNAs when they are encoded in the rRNA operon. Processes pre-crRNA and tracrRNA of type II CRISPR loci if present in the organism. The protein is Ribonuclease 3 of Clostridium beijerinckii (strain ATCC 51743 / NCIMB 8052) (Clostridium acetobutylicum).